Consider the following 758-residue polypeptide: MIVAHNLGFPRIGGQRELKWALESYWKEQLGQQELIQVTRELRALHWKQQQEAGLDLVPVGDFSWYDQVLDMSALLGVVPPRFGEIQDEVDLDTYFCMARGRAPGKKEVAACEMTKWFNTNYHYIVPEFQPQQAFRLASSTLFNQVAEAQALDFPIKPVLLGPLSFLWLGKSKGSTFDKLSLLDALLPVYGQVLHRLKTQGVEWVQIDEPILVLDLPPDWKAAFERAYSSLVNGGPKRLLATYFGALGDNTRLACQLPVEGLHIDLVSAPEQLAKVLDEFPSYKILSAGLVDGRNIWRNDLEASLAQLEALRERLDDRLWIAPSCSLLHSPMDLALESALDEELKSWLAFAVQKIEEVATLKRALVEGRDVVAQALADSAAAQASRRQSERIYRPEIRARMTEVNEDMTRRRHKYPVRAQVQREELKLPLYPTTTIGSFPQTPDIRKARRDFKAGRIAEPEYRRQMEAEIARAIQAQESYGLDVLVHGEAERNDMVEYFGEQLEGFAFTQNGWVQSYGSRCVKPPIIYGDVVRRQPMTVAWLRYAQSLTSRRVKGMLTGPVTLLQWSFVRDDQPRADTCLQLALVLRDEVRDLEQADIKLIQVDEPAFREGLPLRRVEWESYLAWAVRCFRVASSGVEDGTQIHTHMCYSEFNDIIHAIAALDADVITIETSRSDGELLAAFAAFEYPNEIGPGVYDIHSPVVPTEAQIVGLIKKAAEYIPAERLWVNPDCGLKTRAWPEVETALRTMVAAAHGLRSA.

5-methyltetrahydropteroyltri-L-glutamate-binding positions include 16 to 19 and Lys-116; that span reads RELK. L-homocysteine-binding positions include 436 to 438 and Glu-489; that span reads IGS. L-methionine-binding positions include 436–438 and Glu-489; that span reads IGS. 5-methyltetrahydropteroyltri-L-glutamate-binding positions include 520–521 and Trp-566; that span reads RC. An L-homocysteine-binding site is contributed by Asp-604. Residue Asp-604 participates in L-methionine binding. Residue Glu-610 participates in 5-methyltetrahydropteroyltri-L-glutamate binding. Zn(2+) is bound by residues His-646, Cys-648, and Glu-670. The active-site Proton donor is His-699. Cys-731 contributes to the Zn(2+) binding site.

Belongs to the vitamin-B12 independent methionine synthase family. Zn(2+) serves as cofactor.

The enzyme catalyses 5-methyltetrahydropteroyltri-L-glutamate + L-homocysteine = tetrahydropteroyltri-L-glutamate + L-methionine. The protein operates within amino-acid biosynthesis; L-methionine biosynthesis via de novo pathway; L-methionine from L-homocysteine (MetE route): step 1/1. In terms of biological role, catalyzes the transfer of a methyl group from 5-methyltetrahydrofolate to homocysteine resulting in methionine formation. The polypeptide is 5-methyltetrahydropteroyltriglutamate--homocysteine methyltransferase (Nitrosococcus oceani (strain ATCC 19707 / BCRC 17464 / JCM 30415 / NCIMB 11848 / C-107)).